A 209-amino-acid chain; its full sequence is Mei4-dependent protein 1 (209 aa).

An N-terminal signal peptide occupies residues 1 to 22 (MLHATQLCYLLLFCFLPISISS).

It localises to the secreted. The polypeptide is Mei4-dependent protein 1 (mde1) (Schizosaccharomyces pombe (strain 972 / ATCC 24843) (Fission yeast)).